Consider the following 402-residue polypeptide: UPF0261 protein BP1203 (402 aa).

The protein belongs to the UPF0261 family.

In Bordetella pertussis (strain Tohama I / ATCC BAA-589 / NCTC 13251), this protein is UPF0261 protein BP1203.